A 101-amino-acid chain; its full sequence is Gibberellin-regulated protein 6 (101 aa).

The first 23 residues, 1–23 (MAKLITSFLLLTILFTFVCLTMS), serve as a signal peptide directing secretion.

The protein belongs to the GASA family. Post-translationally, six disulfide bonds may be present.

It localises to the secreted. Functionally, gibberellin-regulated protein that may function in hormonal controlled steps of development such as seed germination, flowering and seed maturation. This chain is Gibberellin-regulated protein 6 (GASA6), found in Arabidopsis thaliana (Mouse-ear cress).